The following is a 190-amino-acid chain: Threonylcarbamoyl-AMP synthase (190 aa).

In terms of domain architecture, YrdC-like spans 7–190 (TGSSAAVVDL…ALTGELFRQG (184 aa)).

Belongs to the SUA5 family. TsaC subfamily.

The protein localises to the cytoplasm. The enzyme catalyses L-threonine + hydrogencarbonate + ATP = L-threonylcarbamoyladenylate + diphosphate + H2O. Functionally, required for the formation of a threonylcarbamoyl group on adenosine at position 37 (t(6)A37) in tRNAs that read codons beginning with adenine. Catalyzes the conversion of L-threonine, HCO(3)(-)/CO(2) and ATP to give threonylcarbamoyl-AMP (TC-AMP) as the acyladenylate intermediate, with the release of diphosphate. The protein is Threonylcarbamoyl-AMP synthase of Salmonella typhi.